A 501-amino-acid polypeptide reads, in one-letter code: MSRYDSRTGDSTSYRDRRSDSGFGGTSSYGSSGSHTSSKKDNDGNESPRKLDLDGLTPFEKNFYVESPAVAAMTDTEVEEYRKLREITVEGKDIPKPVKSFRDVGFPDYVLEEVKKAGFTEPTPIQSQGWPMAMKGRDLIGIAETGSGKTLSYLLPAIVHVNAQPMLAHGDGPIVLVLAPTRELAVQIQQEASKFGSSSKIKTTCIYGGVPKGPQVRDLQKGVEIVIATPGRLIDMMESNNTNLRRVTYLVLDEADRMLDMGFDPQIRKIVSHIRPDRQTLYWSATWPKEVEQLSKKFLYNPYKVIIGSSDLKANRAIRQIVDVISESQKYNKLVKLLEDIMDGSRILVFLDTKKGCDQITRQLRMDGWPALSIHGDKSQAERDWVLSEFRSGKSPIMTATDVAARGLDVKDVKYVINYDFPGSLEDYVHRIGRTGRAGAKGTAYTFFTVANARFAKELTNILQEAGQKVSPELASMGRSTAPPPPGLGGFRDRGSRRGWS.

Composition is skewed to basic and acidic residues over residues 1-20 (MSRY…RRSD) and 38-53 (SKKD…KLDL). Residues 1 to 53 (MSRYDSRTGDSTSYRDRRSDSGFGGTSSYGSSGSHTSSKKDNDGNESPRKLDL) form a disordered region. The short motif at 99-127 (KSFRDVGFPDYVLEEVKKAGFTEPTPIQS) is the Q motif element. Residues 130–305 (WPMAMKGRDL…KKFLYNPYKV (176 aa)) form the Helicase ATP-binding domain. 143–150 (AETGSGKT) is an ATP binding site. The short motif at 253–256 (DEAD) is the DEAD box element. In terms of domain architecture, Helicase C-terminal spans 333–478 (KLVKLLEDIM…KVSPELASMG (146 aa)). The segment at 473–501 (ELASMGRSTAPPPPGLGGFRDRGSRRGWS) is disordered. Residues 491 to 501 (FRDRGSRRGWS) are compositionally biased toward basic and acidic residues.

Belongs to the DEAD box helicase family. DDX5/DBP2 subfamily.

The protein resides in the nucleus. It carries out the reaction ATP + H2O = ADP + phosphate + H(+). ATP-dependent RNA helicase involved nonsense-mediated mRNA decay and ribosome biogenesis through rRNA processing. The protein is DEAD-box ATP-dependent RNA helicase 20 (RH20) of Arabidopsis thaliana (Mouse-ear cress).